We begin with the raw amino-acid sequence, 90 residues long: UPF0298 protein SSU05_1549 (90 aa).

The protein belongs to the UPF0298 family.

It is found in the cytoplasm. This is UPF0298 protein SSU05_1549 from Streptococcus suis (strain 05ZYH33).